The following is a 224-amino-acid chain: Putative endoglucanase X (224 aa).

The segment at 147 to 168 is disordered; that stretch reads QTQPTPSPSPTPTDSPLVKKGD. Positions 162–224 constitute a Dockerin domain; sequence PLVKKGDVNL…SILKRILLRN (63 aa).

It catalyses the reaction Endohydrolysis of (1-&gt;4)-beta-D-glucosidic linkages in cellulose, lichenin and cereal beta-D-glucans.. In terms of biological role, this enzyme catalyzes the endohydrolysis of 1,4-beta-glucosidic linkages in cellulose, lichenin and cereal beta-D-glucans. The sequence is that of Putative endoglucanase X (celX) from Acetivibrio thermocellus (Hungateiclostridium thermocellum).